An 88-amino-acid chain; its full sequence is Small ribosomal subunit protein uS15 (88 aa).

It belongs to the universal ribosomal protein uS15 family. As to quaternary structure, part of the 30S ribosomal subunit. Forms a bridge to the 50S subunit in the 70S ribosome, contacting the 23S rRNA.

Functionally, one of the primary rRNA binding proteins, it binds directly to 16S rRNA where it helps nucleate assembly of the platform of the 30S subunit by binding and bridging several RNA helices of the 16S rRNA. Forms an intersubunit bridge (bridge B4) with the 23S rRNA of the 50S subunit in the ribosome. The chain is Small ribosomal subunit protein uS15 from Geotalea daltonii (strain DSM 22248 / JCM 15807 / FRC-32) (Geobacter daltonii).